The chain runs to 556 residues: Dihydroxy-acid dehydratase (556 aa).

D78 lines the Mg(2+) pocket. C119 contributes to the [2Fe-2S] cluster binding site. Mg(2+) is bound by residues D120 and K121. K121 is modified (N6-carboxylysine). C191 provides a ligand contact to [2Fe-2S] cluster. Residue E442 coordinates Mg(2+). S468 functions as the Proton acceptor in the catalytic mechanism.

Belongs to the IlvD/Edd family. In terms of assembly, homodimer. Requires [2Fe-2S] cluster as cofactor. It depends on Mg(2+) as a cofactor.

The enzyme catalyses (2R)-2,3-dihydroxy-3-methylbutanoate = 3-methyl-2-oxobutanoate + H2O. It catalyses the reaction (2R,3R)-2,3-dihydroxy-3-methylpentanoate = (S)-3-methyl-2-oxopentanoate + H2O. Its pathway is amino-acid biosynthesis; L-isoleucine biosynthesis; L-isoleucine from 2-oxobutanoate: step 3/4. The protein operates within amino-acid biosynthesis; L-valine biosynthesis; L-valine from pyruvate: step 3/4. Functionally, functions in the biosynthesis of branched-chain amino acids. Catalyzes the dehydration of (2R,3R)-2,3-dihydroxy-3-methylpentanoate (2,3-dihydroxy-3-methylvalerate) into 2-oxo-3-methylpentanoate (2-oxo-3-methylvalerate) and of (2R)-2,3-dihydroxy-3-methylbutanoate (2,3-dihydroxyisovalerate) into 2-oxo-3-methylbutanoate (2-oxoisovalerate), the penultimate precursor to L-isoleucine and L-valine, respectively. The chain is Dihydroxy-acid dehydratase from Clostridium beijerinckii (strain ATCC 51743 / NCIMB 8052) (Clostridium acetobutylicum).